The following is a 303-amino-acid chain: Probable 5-dehydro-4-deoxyglucarate dehydratase (303 aa).

This sequence belongs to the DapA family.

The enzyme catalyses 5-dehydro-4-deoxy-D-glucarate + H(+) = 2,5-dioxopentanoate + CO2 + H2O. It participates in carbohydrate acid metabolism; D-glucarate degradation; 2,5-dioxopentanoate from D-glucarate: step 2/2. The polypeptide is Probable 5-dehydro-4-deoxyglucarate dehydratase (Polaromonas naphthalenivorans (strain CJ2)).